We begin with the raw amino-acid sequence, 254 residues long: Zinc import ATP-binding protein ZnuC (254 aa).

In terms of domain architecture, ABC transporter spans 5-219; the sequence is VELKEVCLSF…PEFARLFGRP (215 aa). 37 to 44 is an ATP binding site; that stretch reads GPNGAGKS. The segment covering 233-242 has biased composition (basic and acidic residues); it reads CDGEHHHHEP. The tract at residues 233 to 254 is disordered; the sequence is CDGEHHHHEPQVPVIRLPSRNQ.

Belongs to the ABC transporter superfamily. Zinc importer (TC 3.A.1.15.5) family. In terms of assembly, the complex is composed of two ATP-binding proteins (ZnuC), two transmembrane proteins (ZnuB) and a solute-binding protein (ZnuA).

It localises to the cell inner membrane. It catalyses the reaction Zn(2+)(out) + ATP(in) + H2O(in) = Zn(2+)(in) + ADP(in) + phosphate(in) + H(+)(in). Its function is as follows. Part of the ABC transporter complex ZnuABC involved in zinc import. Responsible for energy coupling to the transport system. The protein is Zinc import ATP-binding protein ZnuC of Aeromonas hydrophila subsp. hydrophila (strain ATCC 7966 / DSM 30187 / BCRC 13018 / CCUG 14551 / JCM 1027 / KCTC 2358 / NCIMB 9240 / NCTC 8049).